Consider the following 227-residue polypeptide: Cytochrome c oxidase subunit 2 (227 aa).

Over 1–14 the chain is Mitochondrial intermembrane; that stretch reads MAYPFQLGLQDATS. The chain crosses the membrane as a helical span at residues 15 to 45; that stretch reads PIMEELLHFHDHTLMIVFLISSLVLYIITLM. Residues 46–59 are Mitochondrial matrix-facing; that stretch reads LTTKLTHTSTMDAQ. The chain crosses the membrane as a helical span at residues 60-87; sequence EVETVWTILPAIILILIALPSLRILYMM. The Mitochondrial intermembrane portion of the chain corresponds to 88–227; sequence DEINNPSLTV…YFETWSAVMV (140 aa). Cu cation is bound by residues His-161, Cys-196, Glu-198, Cys-200, His-204, and Met-207. Residue Glu-198 participates in Mg(2+) binding. The residue at position 218 (Tyr-218) is a Phosphotyrosine.

This sequence belongs to the cytochrome c oxidase subunit 2 family. As to quaternary structure, component of the cytochrome c oxidase (complex IV, CIV), a multisubunit enzyme composed of 14 subunits. The complex is composed of a catalytic core of 3 subunits MT-CO1, MT-CO2 and MT-CO3, encoded in the mitochondrial DNA, and 11 supernumerary subunits COX4I, COX5A, COX5B, COX6A, COX6B, COX6C, COX7A, COX7B, COX7C, COX8 and NDUFA4, which are encoded in the nuclear genome. The complex exists as a monomer or a dimer and forms supercomplexes (SCs) in the inner mitochondrial membrane with NADH-ubiquinone oxidoreductase (complex I, CI) and ubiquinol-cytochrome c oxidoreductase (cytochrome b-c1 complex, complex III, CIII), resulting in different assemblies (supercomplex SCI(1)III(2)IV(1) and megacomplex MCI(2)III(2)IV(2)). Found in a complex with TMEM177, COA6, COX18, COX20, SCO1 and SCO2. Interacts with TMEM177 in a COX20-dependent manner. Interacts with COX20. Interacts with COX16. The cofactor is Cu cation.

Its subcellular location is the mitochondrion inner membrane. It carries out the reaction 4 Fe(II)-[cytochrome c] + O2 + 8 H(+)(in) = 4 Fe(III)-[cytochrome c] + 2 H2O + 4 H(+)(out). Its function is as follows. Component of the cytochrome c oxidase, the last enzyme in the mitochondrial electron transport chain which drives oxidative phosphorylation. The respiratory chain contains 3 multisubunit complexes succinate dehydrogenase (complex II, CII), ubiquinol-cytochrome c oxidoreductase (cytochrome b-c1 complex, complex III, CIII) and cytochrome c oxidase (complex IV, CIV), that cooperate to transfer electrons derived from NADH and succinate to molecular oxygen, creating an electrochemical gradient over the inner membrane that drives transmembrane transport and the ATP synthase. Cytochrome c oxidase is the component of the respiratory chain that catalyzes the reduction of oxygen to water. Electrons originating from reduced cytochrome c in the intermembrane space (IMS) are transferred via the dinuclear copper A center (CU(A)) of subunit 2 and heme A of subunit 1 to the active site in subunit 1, a binuclear center (BNC) formed by heme A3 and copper B (CU(B)). The BNC reduces molecular oxygen to 2 water molecules using 4 electrons from cytochrome c in the IMS and 4 protons from the mitochondrial matrix. The chain is Cytochrome c oxidase subunit 2 (MT-CO2) from Vulpes vulpes (Red fox).